Here is a 379-residue protein sequence, read N- to C-terminus: Isocitrate dehydrogenase [NAD] subunit 2, mitochondrial (379 aa).

The N-terminal 27 residues, 1-27 (MSMLSTLRTAGSLRTFSRSACYSFQRF), are a transit peptide targeting the mitochondrion. Substrate-binding residues include Arg129, Arg139, Arg160, and Asp247. Mg(2+) contacts are provided by Asp247, Asp273, and Asp277.

Belongs to the isocitrate and isopropylmalate dehydrogenases family. Octamer of two non-identical subunits IDH1 and IDH2. Requires Mg(2+) as cofactor. The cofactor is Mn(2+).

It is found in the mitochondrion. It carries out the reaction D-threo-isocitrate + NAD(+) = 2-oxoglutarate + CO2 + NADH. Functionally, performs an essential role in the oxidative function of the citric acid cycle and is involved in glutamate biosynthesis. Also binds RNA; specifically to the 5'-untranslated leaders of mitochondrial mRNAs. This chain is Isocitrate dehydrogenase [NAD] subunit 2, mitochondrial (idh2), found in Schizosaccharomyces pombe (strain 972 / ATCC 24843) (Fission yeast).